The chain runs to 226 residues: MLSMFMCNNIVDYVDDIDNGIVQDIEDEASNNVDHDYVYPLPENMVYRFDKSTNILDYLSTERDHVMMAVRYYMSKQRLDDLYRQLPTKTRSYIDIINIYCDKVSNDYNRDMNIMYDMASTKSFTVYDINNEVNTILMDNKGLGVRLATISFITELGRRCMNPVKTIKMFTLLSHTICDDCFVDYITDISPPDNTIPNTSTREYLKLIGITAIMFATYKTLKYMIG.

The protein belongs to the orthopoxvirus OPG045 family. As to quaternary structure, homodimer. Interacts with host pro-apoptotic protein BCL2L11 (via BH3 domain). Interacts with host NLRP1. Interacts with host BAK.

The protein localises to the host mitochondrion outer membrane. It is found in the host cytoplasm. Functionally, plays a role in evading host innate immune response by inhibiting host inflammasome activation. Interacts with and inhibits NLR-mediated interleukin-1 beta/IL1B production in infected cells. At the host mitochondria outer membrane, interacts with the BH3 domain of host BAK and prevents BAK from binding active BAX. In turn, host apoptosis is inhibited. In Vaccinia virus (strain Copenhagen) (VACV), this protein is Apoptosis regulator OPG045 (OPG045).